The sequence spans 524 residues: Cysteine--tRNA ligase (524 aa).

Zn(2+) is bound at residue C29. The short motif at 31-41 (PTVQAAPHVGH) is the 'HIGH' region element. Residues C207, H232, and E236 each coordinate Zn(2+). Residues 246 to 258 (ARPASNAASADSP) show a composition bias toward low complexity. Positions 246–273 (ARPASNAASADSPGPGGGEPGGGEPSSG) are disordered. Residues 259–270 (GPGGGEPGGGEP) show a composition bias toward gly residues. Positions 291-295 (KMSKS) match the 'KMSKS' region motif. K294 lines the ATP pocket.

It belongs to the class-I aminoacyl-tRNA synthetase family. As to quaternary structure, monomer. Zn(2+) serves as cofactor.

The protein localises to the cytoplasm. It carries out the reaction tRNA(Cys) + L-cysteine + ATP = L-cysteinyl-tRNA(Cys) + AMP + diphosphate. The protein is Cysteine--tRNA ligase of Frankia casuarinae (strain DSM 45818 / CECT 9043 / HFP020203 / CcI3).